Consider the following 99-residue polypeptide: Large ribosomal subunit protein uL23 (99 aa).

Belongs to the universal ribosomal protein uL23 family. As to quaternary structure, part of the 50S ribosomal subunit. Contacts protein L29, and trigger factor when it is bound to the ribosome.

In terms of biological role, one of the early assembly proteins it binds 23S rRNA. One of the proteins that surrounds the polypeptide exit tunnel on the outside of the ribosome. Forms the main docking site for trigger factor binding to the ribosome. The protein is Large ribosomal subunit protein uL23 of Lachnospira eligens (strain ATCC 27750 / DSM 3376 / VPI C15-48 / C15-B4) (Eubacterium eligens).